A 474-amino-acid polypeptide reads, in one-letter code: 3-isopropylmalate dehydratase large subunit (474 aa).

Residues cysteine 355, cysteine 415, and cysteine 418 each contribute to the [4Fe-4S] cluster site.

It belongs to the aconitase/IPM isomerase family. LeuC type 1 subfamily. Heterodimer of LeuC and LeuD. The cofactor is [4Fe-4S] cluster.

It carries out the reaction (2R,3S)-3-isopropylmalate = (2S)-2-isopropylmalate. The protein operates within amino-acid biosynthesis; L-leucine biosynthesis; L-leucine from 3-methyl-2-oxobutanoate: step 2/4. In terms of biological role, catalyzes the isomerization between 2-isopropylmalate and 3-isopropylmalate, via the formation of 2-isopropylmaleate. In Shewanella sp. (strain W3-18-1), this protein is 3-isopropylmalate dehydratase large subunit.